The following is a 62-amino-acid chain: Translational regulator CsrA 3 (62 aa).

The protein belongs to the CsrA/RsmA family. As to quaternary structure, homodimer; the beta-strands of each monomer intercalate to form a hydrophobic core, while the alpha-helices form wings that extend away from the core.

It is found in the cytoplasm. In terms of biological role, a key translational regulator that binds mRNA to regulate translation initiation and/or mRNA stability. Mediates global changes in gene expression, shifting from rapid growth to stress survival by linking envelope stress, the stringent response and the catabolite repression systems. Usually binds in the 5'-UTR; binding at or near the Shine-Dalgarno sequence prevents ribosome-binding, repressing translation, binding elsewhere in the 5'-UTR can activate translation and/or stabilize the mRNA. Its function is antagonized by small RNA(s). This Pseudomonas syringae pv. tomato (strain ATCC BAA-871 / DC3000) protein is Translational regulator CsrA 3.